The sequence spans 218 residues: Adenylate kinase (218 aa).

10–15 (GAGKGT) is an ATP binding site. Residues 30–59 (STGDMLRAAVKAGTPLGLEAKKVMDAGGLV) form an NMP region. Residues Thr31, Arg36, 57 to 59 (GLV), 85 to 88 (GFPR), and Gln92 each bind AMP. An LID region spans residues 122 to 159 (GRRVHPASGRVYHTKYNPPKVEGKDDETGDELVQRDDD). ATP contacts are provided by residues Arg123 and 132–133 (VY). The disordered stretch occupies residues 139–160 (PPKVEGKDDETGDELVQRDDDQ). AMP contacts are provided by Arg156 and Arg167. ATP is bound at residue Gly203.

Belongs to the adenylate kinase family. As to quaternary structure, monomer.

It localises to the cytoplasm. It catalyses the reaction AMP + ATP = 2 ADP. Its pathway is purine metabolism; AMP biosynthesis via salvage pathway; AMP from ADP: step 1/1. Catalyzes the reversible transfer of the terminal phosphate group between ATP and AMP. Plays an important role in cellular energy homeostasis and in adenine nucleotide metabolism. The chain is Adenylate kinase from Alcanivorax borkumensis (strain ATCC 700651 / DSM 11573 / NCIMB 13689 / SK2).